A 287-amino-acid chain; its full sequence is Nucleotide-binding protein MXAN_6564 (287 aa).

13–20 (GMSGSGKS) is a binding site for ATP. 62–65 (DVRE) lines the GTP pocket.

The protein belongs to the RapZ-like family.

In terms of biological role, displays ATPase and GTPase activities. The chain is Nucleotide-binding protein MXAN_6564 from Myxococcus xanthus (strain DK1622).